A 512-amino-acid chain; its full sequence is MDHSSNRFGNNGVESILPNYKLGKTLGIGSFGKVKIAEHVVTGHKVAIKILNRRKIKNMEMEEKVRREIKILRLFMHPHIIRQYEVIETTSDIYVVMEYVKSGELFDYIVEKGRLQEDEARNFFQQIISGVEYCHRNMVVHRDLKPENLLLDSRCNIKIADFGLSNVMRDGHFLKTSCGSPNYAAPEVISGKLYAGPEVDVWSCGVILYALLCGTLPFDDENIPNLFKKIKGGIYTLPSHLSSEARDLIPRMLIVDPVKRITIPEIRQHRWFQTHLPRYLAVSPPDTVEQAKKINEEIVQEVVNMGFDRNQVLESLRNRTQNDATVTYYLLLDNRFRVPSGYLESEFQETTDSGSNPMRTPEAGASPVGHWIPAHVDHYGLGARSQVPVDRKWALGLQSHAHPREIMNEVLKALQELNVCWKKIGHYNMKCRWVPGLADGQNTMVNNQLHFRDESSIIEDDCAMTSPTVIKFELQLYKAREEKYLLDIQRVNGPQFLFLDLCAAFLTELRVI.

Residues 20-272 (YKLGKTLGIG…IPEIRQHRWF (253 aa)) form the Protein kinase domain. ATP-binding positions include 26–34 (LGIGSFGKV) and Lys-49. Catalysis depends on Asp-143, which acts as the Proton acceptor. A Phosphoserine modification is found at Ser-165. Residue Thr-176 is modified to Phosphothreonine; by GRIK1 or GRIK2. The segment at 291-391 (AKKINEEIVQ…GARSQVPVDR (101 aa)) is auto-inhibitory domain (AID). The 41-residue stretch at 293–333 (KINEEIVQEVVNMGFDRNQVLESLRNRTQNDATVTYYLLLD) folds into the UBA domain. The tract at residues 295–512 (NEEIVQEVVN…AAFLTELRVI (218 aa)) is regulatory domain (RD). Residues 392 to 512 (KWALGLQSHA…AAFLTELRVI (121 aa)) are PPI. The tract at residues 399–512 (SHAHPREIMN…AAFLTELRVI (114 aa)) is interaction with PAD1 and SKP1. In terms of domain architecture, KA1 spans 463–511 (AMTSPTVIKFELQLYKAREEKYLLDIQRVNGPQFLFLDLCAAFLTELRV).

The protein belongs to the protein kinase superfamily. CAMK Ser/Thr protein kinase family. SNF1 subfamily. In terms of assembly, subunit of a probable heterotrimeric complex consisting of an alpha catalytic (KIN10 or KIN11) subunit, and a beta (KINB) and a gamma (KING or SNF4) non-catalytic regulatory subunits. Interacts with KINB2, KINB3, SNF4 and probably with KINB1 and KING1. Interacts with SKP1/ASK1, PAD1 and the N-terminus of PRL1. Potential subunit of a SCF ubiquitin ligase complex consisting of a SNF1-related protein kinase, SKP1 and CUL1. The association of the SCF complex with the proteasome may be mediated by PAD1 and seems to be inhibited by the interaction with PRL1. Interacts with DSP4. Interacts with the begomovirus AL2 protein and the curtovirus L2 protein. Interacts with ATAF1. Interacts with CIPK14. Interacts with FLZ proteins through their FLZ-type zinc finger domains. Interacts with GEBP/STKR1. Interacts with REM4.1 and REM4.2. Interacts with ADK2. Interacts with IDD8. Interacts with FLZ3, FLZ9, TCP3, TCP13, HB21/ZHD3 and HB23/ZHD10. Interacts with WRI1. Interacts with IPK2b. Interacts with FLZ6 and FLZ10. In terms of processing, sumoylated by SIZ1. Phosphorylated at Thr-176 under submergence. Autophosphorylated. Phosphorylated at Thr-176 by GRIK1/SNAK2 and GRIK2/SNAK1. In terms of tissue distribution, expressed in roots, shoots, flower buds, flowers, siliques and leaves. Restrictly expressed to the base of the leaf, the vascular tissue, and the hydathodes.

It localises to the plastid. Its subcellular location is the chloroplast. It is found in the cytoplasm. The protein resides in the endoplasmic reticulum. It catalyses the reaction L-seryl-[protein] + ATP = O-phospho-L-seryl-[protein] + ADP + H(+). The catalysed reaction is L-threonyl-[protein] + ATP = O-phospho-L-threonyl-[protein] + ADP + H(+). Its activity is regulated as follows. Inactivated by the begomovirus AL2 protein or the curtovirus L2 protein. Activated by phosphorylation at Thr-176 by GRIK1/SNAK2 and GRIK2/SNAK1. Inhibited by trehalose-6-phosphate. In terms of biological role, catalytic subunit of the probable trimeric SNF1-related protein kinase (SnRK) complex, a central regulator of cellular energy homeostasis, which, in response to seemingly unrelated darkness, sugar and stress conditions, activates energy-producing pathways and inhibits energy-consuming processes. May play a role in a signal transduction cascade regulating gene expression and carbohydrate metabolism in higher plants. The SnRK complex may also be involved in the regulation of fatty acid synthesis by phosphorylation of acetyl-CoA carboxylase and in assimilation of nitrogen by phosphorylating nitrate reductase. In vitro, KIN11 exhibits kinase activity on sucrose phosphate synthase and the kinase activity is inhibited by PRL1. May be a subunit of a SCF ubiquitin ligase complex and thus be involved in proteasomal ubiquitination. Involved in innate antiviral defenses. Phosphorylates REM4.1 in vitro. Phosphorylates ADK2 in vitro. This chain is SNF1-related protein kinase catalytic subunit alpha KIN11, found in Arabidopsis thaliana (Mouse-ear cress).